The chain runs to 397 residues: Acetate kinase (397 aa).

Residue N7 coordinates Mg(2+). Residue K14 coordinates ATP. Position 90 (R90) interacts with substrate. The active-site Proton donor/acceptor is D147. Residues 207–211, 282–284, and 330–334 each bind ATP; these read HLGNG, DFR, and GLGEN. E383 is a binding site for Mg(2+).

The protein belongs to the acetokinase family. As to quaternary structure, homodimer. The cofactor is Mg(2+). Mn(2+) serves as cofactor.

It is found in the cytoplasm. The catalysed reaction is acetate + ATP = acetyl phosphate + ADP. The protein operates within metabolic intermediate biosynthesis; acetyl-CoA biosynthesis; acetyl-CoA from acetate: step 1/2. Functionally, catalyzes the formation of acetyl phosphate from acetate and ATP. Can also catalyze the reverse reaction. The protein is Acetate kinase of Clostridium botulinum (strain 657 / Type Ba4).